The sequence spans 444 residues: Phosphoglucosamine mutase (444 aa).

Ser-102 acts as the Phosphoserine intermediate in catalysis. Mg(2+) is bound by residues Ser-102, Asp-241, Asp-243, and Asp-245. The residue at position 102 (Ser-102) is a Phosphoserine.

It belongs to the phosphohexose mutase family. It depends on Mg(2+) as a cofactor. Post-translationally, activated by phosphorylation.

The catalysed reaction is alpha-D-glucosamine 1-phosphate = D-glucosamine 6-phosphate. Functionally, catalyzes the conversion of glucosamine-6-phosphate to glucosamine-1-phosphate. This is Phosphoglucosamine mutase from Acidovorax ebreus (strain TPSY) (Diaphorobacter sp. (strain TPSY)).